A 277-amino-acid polypeptide reads, in one-letter code: Large ribosomal subunit protein uL2 (277 aa).

2 disordered regions span residues 37–60 (KNSTAGRNNNGHITTRHKGGGHKH) and 223–264 (VVMN…NKRT). A compositionally biased stretch (polar residues) spans 39-49 (STAGRNNNGHI). A compositionally biased stretch (basic residues) spans 50-60 (TTRHKGGGHKH). A compositionally biased stretch (basic and acidic residues) spans 229 to 244 (DHPHGGGEGRTGEARE).

It belongs to the universal ribosomal protein uL2 family. In terms of assembly, part of the 50S ribosomal subunit. Forms a bridge to the 30S subunit in the 70S ribosome.

One of the primary rRNA binding proteins. Required for association of the 30S and 50S subunits to form the 70S ribosome, for tRNA binding and peptide bond formation. It has been suggested to have peptidyltransferase activity; this is somewhat controversial. Makes several contacts with the 16S rRNA in the 70S ribosome. This Neisseria gonorrhoeae (strain ATCC 700825 / FA 1090) protein is Large ribosomal subunit protein uL2.